The chain runs to 185 residues: Ribosome-recycling factor (185 aa).

The protein belongs to the RRF family.

It localises to the cytoplasm. Functionally, responsible for the release of ribosomes from messenger RNA at the termination of protein biosynthesis. May increase the efficiency of translation by recycling ribosomes from one round of translation to another. The chain is Ribosome-recycling factor from Streptococcus thermophilus (strain CNRZ 1066).